We begin with the raw amino-acid sequence, 179 residues long: Large ribosomal subunit protein uL5 (179 aa).

Belongs to the universal ribosomal protein uL5 family. Part of the 50S ribosomal subunit; part of the 5S rRNA/L5/L18/L25 subcomplex. Contacts the 5S rRNA and the P site tRNA. Forms a bridge to the 30S subunit in the 70S ribosome.

In terms of biological role, this is one of the proteins that bind and probably mediate the attachment of the 5S RNA into the large ribosomal subunit, where it forms part of the central protuberance. In the 70S ribosome it contacts protein S13 of the 30S subunit (bridge B1b), connecting the 2 subunits; this bridge is implicated in subunit movement. Contacts the P site tRNA; the 5S rRNA and some of its associated proteins might help stabilize positioning of ribosome-bound tRNAs. The protein is Large ribosomal subunit protein uL5 of Shouchella clausii (strain KSM-K16) (Alkalihalobacillus clausii).